The sequence spans 439 residues: Ribosomal protein uS12 methylthiotransferase RimO (439 aa).

An MTTase N-terminal domain is found at 5-117 (KKLHLISLGC…IDELIASKQS (113 aa)). Residues Cys-14, Cys-48, Cys-80, Cys-149, Cys-153, and Cys-156 each contribute to the [4Fe-4S] cluster site. Residues 135-363 (TGSNYHAYIK…GEIAERSTLR (229 aa)) enclose the Radical SAM core domain. The TRAM domain occupies 366-437 (EKMVGKTVEL…GMQLLATLIK (72 aa)).

It belongs to the methylthiotransferase family. RimO subfamily. Requires [4Fe-4S] cluster as cofactor.

It is found in the cytoplasm. The enzyme catalyses L-aspartate(89)-[ribosomal protein uS12]-hydrogen + (sulfur carrier)-SH + AH2 + 2 S-adenosyl-L-methionine = 3-methylsulfanyl-L-aspartate(89)-[ribosomal protein uS12]-hydrogen + (sulfur carrier)-H + 5'-deoxyadenosine + L-methionine + A + S-adenosyl-L-homocysteine + 2 H(+). Catalyzes the methylthiolation of an aspartic acid residue of ribosomal protein uS12. The sequence is that of Ribosomal protein uS12 methylthiotransferase RimO from Sulfurovum sp. (strain NBC37-1).